A 460-amino-acid polypeptide reads, in one-letter code: Photosystem II CP43 reaction center protein (460 aa).

Met1 is a propeptide. 5 helical membrane passes run 56-80 (LFETSHFIPEKPLYEQGMILLPHLA), 121-142 (IVGPDVLEDSFSFFGYDWRDKN), 165-187 (KALFIGGIYDTWAPGGGDIRFIT), 242-262 (RPFSWARRAFVWSGEAYLSYS), and 278-299 (WYNNTVYPSEFYGPTAAEASQA). Glu354 lines the [CaMn4O5] cluster pocket. Residues 434–458 (RARAAAAGFEKGINRENEPVLSMRP) form a helical membrane-spanning segment.

The protein belongs to the PsbB/PsbC family. PsbC subfamily. As to quaternary structure, PSII is composed of 1 copy each of membrane proteins PsbA, PsbB, PsbC, PsbD, PsbE, PsbF, PsbH, PsbI, PsbJ, PsbK, PsbL, PsbM, PsbT, PsbY, PsbZ, Psb30/Ycf12, at least 3 peripheral proteins of the oxygen-evolving complex and a large number of cofactors. It forms dimeric complexes. Binds multiple chlorophylls and provides some of the ligands for the Ca-4Mn-5O cluster of the oxygen-evolving complex. It may also provide a ligand for a Cl- that is required for oxygen evolution. PSII binds additional chlorophylls, carotenoids and specific lipids. serves as cofactor.

It localises to the plastid. The protein localises to the chloroplast thylakoid membrane. Its function is as follows. One of the components of the core complex of photosystem II (PSII). It binds chlorophyll and helps catalyze the primary light-induced photochemical processes of PSII. PSII is a light-driven water:plastoquinone oxidoreductase, using light energy to abstract electrons from H(2)O, generating O(2) and a proton gradient subsequently used for ATP formation. This chain is Photosystem II CP43 reaction center protein, found in Cyanidium caldarium (Red alga).